A 60-amino-acid polypeptide reads, in one-letter code: Ribosome biogenesis protein Nop10 (60 aa).

The protein belongs to the NOP10 family.

Functionally, involved in ribosome biogenesis; more specifically in 18S rRNA pseudouridylation and in cleavage of pre-rRNA. The polypeptide is Ribosome biogenesis protein Nop10 (Haloquadratum walsbyi (strain DSM 16790 / HBSQ001)).